Consider the following 1130-residue polypeptide: Alpha-mannosidase 2 (1130 aa).

Over 1–14 (MRTRVLRCRPFSTR) the chain is Cytoplasmic. A helical; Signal-anchor for type II membrane protein membrane pass occupies residues 15 to 35 (ILLLLLFVLAFGVYCYFYNAS). Topologically, residues 36 to 1130 (PQNYNKPRIS…MEVKTYKIRF (1095 aa)) are lumenal. N-linked (GlcNAc...) asparagine glycosylation occurs at Asn-117. Zn(2+) contacts are provided by His-133 and Asp-135. Asn-166 carries an N-linked (GlcNAc...) asparagine glycan. Zn(2+) contacts are provided by Asp-247 and His-527. The Nucleophile role is filled by Asp-247. 4 N-linked (GlcNAc...) asparagine glycosylation sites follow: Asn-622, Asn-683, Asn-1056, and Asn-1095.

This sequence belongs to the glycosyl hydrolase 38 family. In terms of assembly, homodimer; disulfide-linked. Zn(2+) is required as a cofactor. In terms of processing, N-glycosylated.

The protein localises to the microsome membrane. The protein resides in the golgi apparatus membrane. It carries out the reaction N(4)-{beta-D-GlcNAc-(1-&gt;2)-alpha-D-Man-(1-&gt;3)-[alpha-D-Man-(1-&gt;3)-[alpha-D-Man-(1-&gt;6)]-alpha-D-Man-(1-&gt;6)]-beta-D-Man-(1-&gt;4)-beta-D-GlcNAc-(1-&gt;4)-beta-D-GlcNAc}-L-asparaginyl-[protein] + 2 H2O = 2 alpha-D-mannopyranose + an N(4)-{beta-D-GlcNAc-(1-&gt;2)-alpha-D-Man-(1-&gt;3)-[alpha-D-Man-(1-&gt;6)]-beta-D-Man-(1-&gt;4)-beta-D-GlcNAc-(1-&gt;4)-beta-D-GlcNAc}-L-asparaginyl-[protein]. It functions in the pathway protein modification; protein glycosylation. With respect to regulation, inhibited by swainsonine. Its function is as follows. Catalyzes the first committed step in the biosynthesis of complex N-glycans. It controls conversion of high mannose to complex N-glycans; the final hydrolytic step in the N-glycan maturation pathway. The chain is Alpha-mannosidase 2 from Spodoptera frugiperda (Fall armyworm).